Reading from the N-terminus, the 267-residue chain is 2-dehydro-3-deoxyphosphooctonate aldolase (267 aa).

The protein belongs to the KdsA family.

The protein resides in the cytoplasm. The catalysed reaction is D-arabinose 5-phosphate + phosphoenolpyruvate + H2O = 3-deoxy-alpha-D-manno-2-octulosonate-8-phosphate + phosphate. It participates in carbohydrate biosynthesis; 3-deoxy-D-manno-octulosonate biosynthesis; 3-deoxy-D-manno-octulosonate from D-ribulose 5-phosphate: step 2/3. Its pathway is bacterial outer membrane biogenesis; lipopolysaccharide biosynthesis. This Campylobacter jejuni subsp. doylei (strain ATCC BAA-1458 / RM4099 / 269.97) protein is 2-dehydro-3-deoxyphosphooctonate aldolase.